The following is a 262-amino-acid chain: Phosphatidylglycerol--prolipoprotein diacylglyceryl transferase (262 aa).

A run of 4 helical transmembrane segments spans residues 17–37, 59–79, 94–114, and 121–141; these read FAIH…LLLG, LLFA…TLFY, IWEG…ALYW, and TTFF…LAFG. Residue Arg-142 participates in a 1,2-diacyl-sn-glycero-3-phospho-(1'-sn-glycerol) binding. 3 consecutive transmembrane segments (helical) span residues 176-196, 201-221, and 231-251; these read QIYQ…FYAG, VGQV…LAEY, and LLGL…FFGI.

The protein belongs to the Lgt family.

It localises to the cell inner membrane. The enzyme catalyses L-cysteinyl-[prolipoprotein] + a 1,2-diacyl-sn-glycero-3-phospho-(1'-sn-glycerol) = an S-1,2-diacyl-sn-glyceryl-L-cysteinyl-[prolipoprotein] + sn-glycerol 1-phosphate + H(+). It participates in protein modification; lipoprotein biosynthesis (diacylglyceryl transfer). Catalyzes the transfer of the diacylglyceryl group from phosphatidylglycerol to the sulfhydryl group of the N-terminal cysteine of a prolipoprotein, the first step in the formation of mature lipoproteins. This is Phosphatidylglycerol--prolipoprotein diacylglyceryl transferase from Polynucleobacter necessarius subsp. necessarius (strain STIR1).